The primary structure comprises 88 residues: Small ribosomal subunit protein uS17 (88 aa).

Belongs to the universal ribosomal protein uS17 family. Part of the 30S ribosomal subunit.

In terms of biological role, one of the primary rRNA binding proteins, it binds specifically to the 5'-end of 16S ribosomal RNA. In Levilactobacillus brevis (strain ATCC 367 / BCRC 12310 / CIP 105137 / JCM 1170 / LMG 11437 / NCIMB 947 / NCTC 947) (Lactobacillus brevis), this protein is Small ribosomal subunit protein uS17.